Here is a 935-residue protein sequence, read N- to C-terminus: C-1-tetrahydrofolate synthase, cytoplasmic (935 aa).

Position 1 is an N-acetylmethionine (Met1). Positions 2–291 (APAEILNGKE…MLMQSTVESA (290 aa)) are methylenetetrahydrofolate dehydrogenase and methenyltetrahydrofolate cyclohydrolase (D/C) domain. Substrate is bound by residues 52–56 (YINVK) and 99–101 (VQL). Lys56 is a catalytic residue. NADP(+) contacts are provided by residues 172–174 (GRS) and Ser197. 272–276 (PGGVG) is a binding site for substrate. A formyltetrahydrofolate synthetase domain region spans residues 310-935 (LNLKTPVPSD…PETEQVNGLF (626 aa)). Ser318 carries the post-translational modification Phosphoserine. 380 to 387 (TPLGEGKS) contacts ATP. Residues Ser413 and Ser490 each carry the phosphoserine modification.

In the N-terminal section; belongs to the tetrahydrofolate dehydrogenase/cyclohydrolase family. It in the C-terminal section; belongs to the formate--tetrahydrofolate ligase family. In terms of assembly, homodimer. Ubiquitous.

It is found in the cytoplasm. It carries out the reaction (6R)-5,10-methylene-5,6,7,8-tetrahydrofolate + NADP(+) = (6R)-5,10-methenyltetrahydrofolate + NADPH. It catalyses the reaction (6R)-5,10-methenyltetrahydrofolate + H2O = (6R)-10-formyltetrahydrofolate + H(+). The catalysed reaction is (6S)-5,6,7,8-tetrahydrofolate + formate + ATP = (6R)-10-formyltetrahydrofolate + ADP + phosphate. The protein operates within one-carbon metabolism; tetrahydrofolate interconversion. Functionally, trifunctional enzyme that catalyzes the interconversion of three forms of one-carbon-substituted tetrahydrofolate: (6R)-5,10-methylene-5,6,7,8-tetrahydrofolate, 5,10-methenyltetrahydrofolate and (6S)-10-formyltetrahydrofolate. These derivatives of tetrahydrofolate are differentially required in nucleotide and amino acid biosynthesis, (6S)-10-formyltetrahydrofolate being required for purine biosynthesis while (6R)-5,10-methylene-5,6,7,8-tetrahydrofolate is used for serine and methionine biosynthesis for instance. This is C-1-tetrahydrofolate synthase, cytoplasmic (MTHFD1) from Homo sapiens (Human).